Consider the following 460-residue polypeptide: Exodeoxyribonuclease 7 large subunit (460 aa).

Residues 438–460 (ARVEKVNREEEKQSGSQKNGTRD) form a disordered region. A compositionally biased stretch (basic and acidic residues) spans 439-450 (RVEKVNREEEKQ). Positions 451 to 460 (SGSQKNGTRD) are enriched in polar residues.

Belongs to the XseA family. In terms of assembly, heterooligomer composed of large and small subunits.

It is found in the cytoplasm. The catalysed reaction is Exonucleolytic cleavage in either 5'- to 3'- or 3'- to 5'-direction to yield nucleoside 5'-phosphates.. Its function is as follows. Bidirectionally degrades single-stranded DNA into large acid-insoluble oligonucleotides, which are then degraded further into small acid-soluble oligonucleotides. In Brevibacillus brevis (strain 47 / JCM 6285 / NBRC 100599), this protein is Exodeoxyribonuclease 7 large subunit.